Reading from the N-terminus, the 133-residue chain is Holo-[acyl-carrier-protein] synthase (133 aa).

The Mg(2+) site is built by Asp8 and Glu64.

This sequence belongs to the P-Pant transferase superfamily. AcpS family. Mg(2+) serves as cofactor.

It is found in the cytoplasm. The catalysed reaction is apo-[ACP] + CoA = holo-[ACP] + adenosine 3',5'-bisphosphate + H(+). Functionally, transfers the 4'-phosphopantetheine moiety from coenzyme A to a Ser of acyl-carrier-protein. The protein is Holo-[acyl-carrier-protein] synthase of Shewanella loihica (strain ATCC BAA-1088 / PV-4).